The primary structure comprises 36 residues: Pancreatic polypeptide (36 aa).

Tyrosine amide is present on Y36.

This sequence belongs to the NPY family.

Its subcellular location is the secreted. In terms of biological role, hormone secreted by pancreatic cells that acts as a regulator of pancreatic and gastrointestinal functions. In Anser anser anser (Western greylag goose), this protein is Pancreatic polypeptide (PPY).